Consider the following 427-residue polypeptide: MSTSFENKATNRGIITFTISQDEIKPALDQAFNKVKKDLNVPGFRKGHMPRTVFNQKFGEEALYENALNLVLPKAYEAAVAELGLDVVAQPKIDVVSMEKGQDWKLTAEVVTKPEVKLGDYKDLSVEVDASKEVSDEEVDAKVERERNNLAELTVKDGEAAQGDTVVIDFVGSVDGVEFDGGKGDNFSLELGSGQFIPGFEEQLVGSKAGQTVDVNVTFPEDYQAEDLAGKDAKFVTTIHEVKTKEVPALDDELAKDIDDEVETLDELKAKYRKELESAKEIAFDDAVEGAAIELAVANAEIVELPEEMVHDEVHRAMNEFMGNMQRQGISPEMYFQLTGTTEEDLHKQYQADADKRVKTNLVIEAIAAAEGFEATDEEIEKEITDLASEYNMEADQVRGLLSADMLKHDIAMKKAVDVITSSATVK.

The 86-residue stretch at 163–248 folds into the PPIase FKBP-type domain; it reads GDTVVIDFVG…IHEVKTKEVP (86 aa).

This sequence belongs to the FKBP-type PPIase family. Tig subfamily.

It is found in the cytoplasm. The catalysed reaction is [protein]-peptidylproline (omega=180) = [protein]-peptidylproline (omega=0). In terms of biological role, involved in protein export. Acts as a chaperone by maintaining the newly synthesized protein in an open conformation. Functions as a peptidyl-prolyl cis-trans isomerase. In Streptococcus agalactiae serotype V (strain ATCC BAA-611 / 2603 V/R), this protein is Trigger factor.